Consider the following 414-residue polypeptide: Gamma-glutamyl phosphate reductase (414 aa).

The protein belongs to the gamma-glutamyl phosphate reductase family.

Its subcellular location is the cytoplasm. It catalyses the reaction L-glutamate 5-semialdehyde + phosphate + NADP(+) = L-glutamyl 5-phosphate + NADPH + H(+). Its pathway is amino-acid biosynthesis; L-proline biosynthesis; L-glutamate 5-semialdehyde from L-glutamate: step 2/2. In terms of biological role, catalyzes the NADPH-dependent reduction of L-glutamate 5-phosphate into L-glutamate 5-semialdehyde and phosphate. The product spontaneously undergoes cyclization to form 1-pyrroline-5-carboxylate. The sequence is that of Gamma-glutamyl phosphate reductase from Alkaliphilus metalliredigens (strain QYMF).